Here is a 130-residue protein sequence, read N- to C-terminus: Large ribosomal subunit protein bL31c (130 aa).

The transit peptide at methionine 1–cysteine 36 directs the protein to the chloroplast.

The protein belongs to the bacterial ribosomal protein bL31 family. Type A subfamily. Component of the chloroplast large ribosomal subunit (LSU). Mature 70S chloroplast ribosomes of higher plants consist of a small (30S) and a large (50S) subunit. The 30S small subunit contains 1 molecule of ribosomal RNA (16S rRNA) and 24 different proteins. The 50S large subunit contains 3 rRNA molecules (23S, 5S and 4.5S rRNA) and 33 different proteins.

The protein localises to the plastid. The protein resides in the chloroplast. In terms of biological role, component of the chloroplast ribosome (chloro-ribosome), a dedicated translation machinery responsible for the synthesis of chloroplast genome-encoded proteins, including proteins of the transcription and translation machinery and components of the photosynthetic apparatus. The protein is Large ribosomal subunit protein bL31c (RPL31) of Spinacia oleracea (Spinach).